We begin with the raw amino-acid sequence, 468 residues long: Keratin, type I cytoskeletal 26 (468 aa).

The interval 1-82 (MSFRLSGGSR…GNEHSLLSGN (82 aa)) is head. Positions 83–118 (EKVTMQNLNDRLASYLDHVHALEEANADLEQKIKGW) are coil 1A. In terms of domain architecture, IF rod spans 83–398 (EKVTMQNLND…NLLDGEERKS (316 aa)). The tract at residues 119–140 (YEKCEPGSSREHDHDYSRYFSV) is linker 1. Residues 141-232 (IEDLKRQIIS…KSHEEEMEVL (92 aa)) are coil 1B. Residues 233-255 (QYTAGGNVNVEMNATPGVDLTVL) form a linker 12 region. Residues 256–394 (LNNMRAEYED…DIYCNLLDGE (139 aa)) are coil 2. The tract at residues 395–465 (ERKSKSTCYK…NITVEQRVPS (71 aa)) is tail.

The protein belongs to the intermediate filament family. Heterotetramer of two type I and two type II keratins. Strongly expressed in skin and scalp, and weak expression observed in thymus and tongue. In the hair follicle, expression is restricted to the mid- to upper inner root sheath cuticle, being present slightly above the apex of the dermal papilla (at protein level).

This chain is Keratin, type I cytoskeletal 26, found in Homo sapiens (Human).